Consider the following 254-residue polypeptide: Alcohol dehydrogenase (254 aa).

An NAD(+)-binding site is contributed by 10 to 33; sequence FVAGLGGIGLDTSRELVKRNLKNL. Ser-138 is a substrate binding site. Tyr-151 functions as the Proton acceptor in the catalytic mechanism.

The protein belongs to the short-chain dehydrogenases/reductases (SDR) family. In terms of assembly, homodimer.

It catalyses the reaction a primary alcohol + NAD(+) = an aldehyde + NADH + H(+). It carries out the reaction a secondary alcohol + NAD(+) = a ketone + NADH + H(+). The protein is Alcohol dehydrogenase (Adh) of Drosophila pseudoobscura pseudoobscura (Fruit fly).